The primary structure comprises 104 residues: MGLYRPSKFFHPPIPHIPFTINPDFFSFHIQRLKAKANPENFLICFPPPDIYKGFVFCCQLDLVHLFSYVFFLFLLKICVDVLQYVIYPKHFTHKKPGFENYSI.

The chain crosses the membrane as a helical span at residues 63 to 83; it reads LVHLFSYVFFLFLLKICVDVL.

It localises to the membrane. In terms of biological role, may be involved in a pathway contributing to genomic integrity. The polypeptide is Increased recombination centers protein 13 (IRC13) (Saccharomyces cerevisiae (strain ATCC 204508 / S288c) (Baker's yeast)).